The chain runs to 236 residues: uncharacterized protein (236 aa).

Residues 3-116 (TCLIVDDELF…RLSKTLKRVR (114 aa)) form the Response regulatory domain. Position 54 is a 4-aspartylphosphate (D54). An HTH LytTR-type domain is found at 135-235 (LPCYSGSKLK…LKSLKQLFGF (101 aa)).

This is an uncharacterized protein from Shewanella oneidensis (strain ATCC 700550 / JCM 31522 / CIP 106686 / LMG 19005 / NCIMB 14063 / MR-1).